The sequence spans 116 residues: Large ribosomal subunit protein bL20 (116 aa).

The protein belongs to the bacterial ribosomal protein bL20 family.

Binds directly to 23S ribosomal RNA and is necessary for the in vitro assembly process of the 50S ribosomal subunit. It is not involved in the protein synthesizing functions of that subunit. The chain is Large ribosomal subunit protein bL20 from Desulfosudis oleivorans (strain DSM 6200 / JCM 39069 / Hxd3) (Desulfococcus oleovorans).